Here is a 525-residue protein sequence, read N- to C-terminus: MSNTYGLERLGIINPGTIYRNLPMARLVEIALARGEGLLASNGALSVNTGKYTGRSPHDRYIVDTPAVHDSISWGAVNQPVSEATFERLYSRLTAYLQGKDLFVFDGFVGADPAYRMPIRIVNEYAWQNLFVHQLFIRPTAEELAGHEPRFTVICAPGFKAIPEEDGTRSEAFIILNFDRRLVIIGGTSYAGEMKKSIFTVMNYLLPEQGVCPMHCSANMGPAGDTALFFGLSGTGKTTLSADPERYLIGDDEHGWSDKGIFNFEGGCYAKCIKLSAEHEPQIWNAIRFGSVLENVMVDPDCRIIDYDSDALTENTRAAYPVDFIPNAVIPGVGGHPQTVVFLTADAFGVMPPIAKLTREQAMYYFLSGYTSKLAGTERGVTEPKATFSTCFGAPFLPRSPMVYANLLGERIARHNASVYLVNTGWTGGPYGTGRRMSLPYTRAMVRAALNGELDKVEFTPDPVFGFLVPKACPGVPAEILNPRNTWAETEKYDAMARKLASLFRENFAKFKDVPVSIQEAGVVG.

Positions 55, 190, and 196 each coordinate substrate. Residues K196, H215, and 231–239 (GLSGTGKTT) each bind ATP. The Mn(2+) site is built by K196 and H215. A Mn(2+)-binding site is contributed by D252. Residues E280, R317, and T442 each contribute to the ATP site. R317 is a binding site for substrate.

The protein belongs to the phosphoenolpyruvate carboxykinase (ATP) family. The cofactor is Mn(2+).

It localises to the cytoplasm. The catalysed reaction is oxaloacetate + ATP = phosphoenolpyruvate + ADP + CO2. Its pathway is carbohydrate biosynthesis; gluconeogenesis. Its function is as follows. Involved in the gluconeogenesis. Catalyzes the conversion of oxaloacetate (OAA) to phosphoenolpyruvate (PEP) through direct phosphoryl transfer between the nucleoside triphosphate and OAA. The sequence is that of Phosphoenolpyruvate carboxykinase (ATP) 1 from Moorella thermoacetica (strain ATCC 39073 / JCM 9320).